A 558-amino-acid polypeptide reads, in one-letter code: Factor VII-activating protease (558 aa).

The N-terminal stretch at 1-23 is a signal peptide; the sequence is MFARMSDLHVLLLMVLAGKTAFG. Asparagine 54 carries N-linked (GlcNAc...) asparagine glycosylation. 3 EGF-like domains span residues 71–107, 109–146, and 148–186; these read EDDP…NRCQ, VQNK…SDCS, and VVPV…KLCE. Cystine bridges form between cysteine 75–cysteine 86, cysteine 80–cysteine 95, cysteine 97–cysteine 106, cysteine 113–cysteine 123, cysteine 118–cysteine 134, cysteine 136–cysteine 145, cysteine 152–cysteine 163, cysteine 157–cysteine 174, cysteine 176–cysteine 185, cysteine 192–cysteine 274, cysteine 213–cysteine 255, cysteine 244–cysteine 269, cysteine 299–cysteine 433, cysteine 345–cysteine 361, cysteine 353–cysteine 422, cysteine 445–cysteine 513, cysteine 475–cysteine 491, and cysteine 503–cysteine 531. In terms of domain architecture, Kringle spans 191–274; that stretch reads DCYVDDGYSY…KWEYCDVPAC (84 aa). The region spanning 312-553 is the Peptidase S1 domain; the sequence is IFGGFKSTAG…FLTWIKATME (242 aa). Catalysis depends on charge relay system residues histidine 360 and aspartate 409. Serine 507 functions as the Charge relay system in the catalytic mechanism.

Belongs to the peptidase S1 family. As to quaternary structure, heterodimer; disulfide-linked. Heterodimer of a 50 kDa heavy and a 27 kDa light chain linked by a disulfide bond. Post-translationally, proteolytic cleavage at Gly-23 or Leu-27 can give rise to the 50 kDa heavy chain (HC) and cleavage at Arg-311 or Lys-317 can give rise to the 27 kDa light chain (LC). The HC can undergo further proteolytic cleavage giving rise to a 26 kDa fragment. The LC can undergo further proteolytic cleavage at Arg-311 leading to a 17-kDa fragment and at Arg-478 leading to a 8-kDa fragment.

Its subcellular location is the secreted. Its function is as follows. Cleaves the alpha-chain at multiple sites and the beta-chain between 'Lys-53' and 'Lys-54' but not the gamma-chain of fibrinogen and therefore does not initiate the formation of the fibrin clot and does not cause the fibrinolysis directly. It does not cleave (activate) prothrombin and plasminogen but converts the inactive single chain urinary plasminogen activator (pro-urokinase) to the active two chain form. Activates coagulation factor VII. May function as a tumor suppressor negatively regulating cell proliferation and cell migration. The sequence is that of Factor VII-activating protease (HABP2) from Bos taurus (Bovine).